A 1073-amino-acid polypeptide reads, in one-letter code: Probable inorganic carbon transporter subunit DabA (1073 aa).

Residues C551, D553, H742, and C757 each coordinate Zn(2+).

The protein belongs to the inorganic carbon transporter (TC 9.A.2) DabA family. In terms of assembly, forms a complex with DabB. It depends on Zn(2+) as a cofactor.

Its subcellular location is the cell inner membrane. In terms of biological role, part of an energy-coupled inorganic carbon pump. In Methylococcus capsulatus (strain ATCC 33009 / NCIMB 11132 / Bath), this protein is Probable inorganic carbon transporter subunit DabA.